Here is a 200-residue protein sequence, read N- to C-terminus: MSNQTNKAQDNQVEEIVEGELLNENGTEATGEASLMDELTQANFRVEELEKALQEAETKVESQKDSVIRAAAEVDNIRRRSAIDVEKAHKFALEKFINELLPVLDNMERALQGTDAEAEATKAIYEGVELTAKSFVSTVEKFGLTQVDPLGDTFNPELHQAIGMQPSADFPANTVMMVMQKGYTLNDRLLRPAMVMVSQG.

A compositionally biased stretch (polar residues) spans 1–11 (MSNQTNKAQDN). The interval 1 to 29 (MSNQTNKAQDNQVEEIVEGELLNENGTEA) is disordered.

The protein belongs to the GrpE family. In terms of assembly, homodimer.

Its subcellular location is the cytoplasm. Functionally, participates actively in the response to hyperosmotic and heat shock by preventing the aggregation of stress-denatured proteins, in association with DnaK and GrpE. It is the nucleotide exchange factor for DnaK and may function as a thermosensor. Unfolded proteins bind initially to DnaJ; upon interaction with the DnaJ-bound protein, DnaK hydrolyzes its bound ATP, resulting in the formation of a stable complex. GrpE releases ADP from DnaK; ATP binding to DnaK triggers the release of the substrate protein, thus completing the reaction cycle. Several rounds of ATP-dependent interactions between DnaJ, DnaK and GrpE are required for fully efficient folding. This Shewanella halifaxensis (strain HAW-EB4) protein is Protein GrpE.